The chain runs to 1003 residues: Methyl-CpG-binding domain protein 6 (1003 aa).

Residues 11-81 form the MBD domain; sequence DRAGGPVATS…KVFNFDPLAP (71 aa). Positions 57-68 are required for interaction with ASXL1/2/3; it reads DGTCKCGLECPL. Disordered regions lie at residues 120–219, 238–664, and 683–1003; these read TCSH…PPPA, VPSD…PLLF, and ATLD…KLAP. Composition is skewed to pro residues over residues 140-155 and 268-287; these read PGPP…PPTT and TPPP…PASQ. Low complexity-rich tracts occupy residues 297–308, 319–328, and 348–361; these read LPLVLGPLGGAP, LASSLLSAAA, and AQAP…SLRP. A compositionally biased stretch (pro residues) spans 391 to 407; sequence APAPVPQPFSLPEPSQP. Positions 408-426 are enriched in low complexity; that stretch reads ILPSVLSLLGLPTPGPSHS. A compositionally biased stretch (pro residues) spans 439–456; the sequence is LPPPPTLSSGSPPQPRHP. 2 stretches are compositionally biased toward low complexity: residues 460-498 and 531-548; these read SLPG…PSEG and GAGF…LSLG. Residues 570–589 are compositionally biased toward pro residues; that stretch reads QPPPEPLLPPPGGPGPPLAP. The span at 590–602 shows a compositional bias: low complexity; that stretch reads GEPEGPSLLVASL. Pro residues predominate over residues 603–617; the sequence is LPPPPSDLLPPPSAP. The segment covering 618-633 has biased composition (low complexity); sequence PSNLLASFLPLLALGP. Residues 635 to 649 are compositionally biased toward gly residues; that stretch reads AGDGEGSAEGAGGPS. A compositionally biased stretch (low complexity) spans 650-662; that stretch reads GEPFSGLGDLSPL. A compositionally biased stretch (polar residues) spans 707–718; the sequence is TSSVTTATTDPG. 3 stretches are compositionally biased toward low complexity: residues 732–761, 768–778, and 788–798; these read PPQL…LPSL, LLSGQLGLQLL, and SEASSPLACLL. Residues 805 to 817 show a composition bias toward pro residues; the sequence is PEQPEAPCLPPES. Positions 818-837 are enriched in low complexity; it reads PASALEPEPARPPLSALAPP. Positions 947-958 are enriched in basic residues; the sequence is RKSRRGRRRKYN. Residues 959-969 show a composition bias toward polar residues; that stretch reads PTRNSNSSRQD. Positions 989–1003 are enriched in basic residues; it reads RPGRPAKNKRRKLAP.

Core component of the polycomb repressive deubiquitinase (PR-DUB) complex, at least composed of BAP1, one of ASXL1, ASXL2 or (probably) ASXL3, and one of MBD5 or MBD6. Distinct combinations of ASXL and MBD proteins may preferentially bind specific histone modification marks. The PR-DUB core associates with a number of accessory proteins, including FOXK1, FOXK2, KDM1B, HCFC1 and OGT; KDM1B specifically associates with ASXL2 PR-DUB complexes. Interacts (via MBD domain) with ASXL1, ASXL2 and ASXL3 (via PHD domain); the interaction is probably direct, mediates association with other PR-DUB complex core components.

The protein localises to the nucleus. Its subcellular location is the chromosome. Functionally, non-catalytic component of the polycomb repressive deubiquitinase (PR-DUB) complex, a complex that specifically mediates deubiquitination of histone H2A monoubiquitinated at 'Lys-120' (H2AK119ub1). Important for stability of PR-DUB components and stimulating its ubiquitinase activity. As part of the PR-DUB complex, associates with chromatin enriched in histone marks H3K4me1, H3K4me3, and H3K27Ac, but not in H3K27me3. MBD5 and MBD6 containing complexes associate with distinct chromatin regions enriched in genes involved in different pathways. Heterochromatin recruitment is not mediated by DNA methylation. The PR-DUB complex is an epigenetic regulator of gene expression, including genes involved in development, cell communication, signaling, cell proliferation and cell viability; may promote cancer cell growth. The sequence is that of Methyl-CpG-binding domain protein 6 (MBD6) from Homo sapiens (Human).